The following is a 339-amino-acid chain: GTP 3',8-cyclase (339 aa).

The Radical SAM core domain occupies 20 to 241 (NFDRKFEYLR…WTQKQSLSHD (222 aa)). GTP is bound at residue Arg29. Residues Cys36 and Cys40 each contribute to the [4Fe-4S] cluster site. Residue Tyr42 coordinates S-adenosyl-L-methionine. Cys43 is a [4Fe-4S] cluster binding site. A GTP-binding site is contributed by Arg78. Gly82 lines the S-adenosyl-L-methionine pocket. Thr109 is a GTP binding site. Residue Ser133 participates in S-adenosyl-L-methionine binding. Lys170 contacts GTP. S-adenosyl-L-methionine is bound at residue Met204. Cys267 and Cys270 together coordinate [4Fe-4S] cluster. 272–274 (RLR) is a GTP binding site. [4Fe-4S] cluster is bound at residue Cys284.

Belongs to the radical SAM superfamily. MoaA family. As to quaternary structure, monomer and homodimer. It depends on [4Fe-4S] cluster as a cofactor.

It carries out the reaction GTP + AH2 + S-adenosyl-L-methionine = (8S)-3',8-cyclo-7,8-dihydroguanosine 5'-triphosphate + 5'-deoxyadenosine + L-methionine + A + H(+). Its pathway is cofactor biosynthesis; molybdopterin biosynthesis. In terms of biological role, catalyzes the cyclization of GTP to (8S)-3',8-cyclo-7,8-dihydroguanosine 5'-triphosphate. The chain is GTP 3',8-cyclase from Psychromonas ingrahamii (strain DSM 17664 / CCUG 51855 / 37).